The primary structure comprises 480 residues: Glycerol 3-phosphate dehydrogenase (480 aa).

FAD is bound by residues I12, E31, 40-41 (TT), and 45-47 (SAI). Residues S45 and H49 each coordinate sn-glycerol 3-phosphate. H49 (proton acceptor) is an active-site residue. Position 172 (V172) interacts with FAD. Residues K249 and R310 each contribute to the sn-glycerol 3-phosphate site. 335–336 (IE) lines the FAD pocket. Residue S337 participates in sn-glycerol 3-phosphate binding. S341 provides a ligand contact to FAD. 4 residues coordinate [2Fe-2S] cluster: C400, C402, C437, and C442.

[2Fe-2S] cluster is required as a cofactor.

It catalyses the reaction sn-glycerol 3-phosphate + A = dihydroxyacetone phosphate + AH2. The protein operates within polyol metabolism; glycerol degradation via glycerol kinase pathway; glycerone phosphate from sn-glycerol 3-phosphate (aerobic route): step 1/1. Functionally, catalyzes the dehydrogenation of glycerol 3-phosphate to dihydroxyacetone phosphate. Is probably involved in anaerobic glycerol metabolism. Active in vitro with the artificial electron acceptor 2,6-dichlorophenolindophenol (DCPIP), but not with NAD or NADP. Also displays a very low oxidase activity in vitro on glycerol 3-phosphate with O2 as the electron acceptor, but this activity is most likely not physiological. This Caloramator mitchellensis protein is Glycerol 3-phosphate dehydrogenase.